The chain runs to 366 residues: NADH-quinone oxidoreductase subunit D (366 aa).

This sequence belongs to the complex I 49 kDa subunit family. As to quaternary structure, NDH-1 is composed of 14 different subunits. Subunits NuoB, C, D, E, F, and G constitute the peripheral sector of the complex.

The protein localises to the cell membrane. The catalysed reaction is a quinone + NADH + 5 H(+)(in) = a quinol + NAD(+) + 4 H(+)(out). Its function is as follows. NDH-1 shuttles electrons from NADH, via FMN and iron-sulfur (Fe-S) centers, to quinones in the respiratory chain. The immediate electron acceptor for the enzyme in this species is believed to be a menaquinone. Couples the redox reaction to proton translocation (for every two electrons transferred, four hydrogen ions are translocated across the cytoplasmic membrane), and thus conserves the redox energy in a proton gradient. In Bacillus cereus (strain ATCC 14579 / DSM 31 / CCUG 7414 / JCM 2152 / NBRC 15305 / NCIMB 9373 / NCTC 2599 / NRRL B-3711), this protein is NADH-quinone oxidoreductase subunit D.